The sequence spans 96 residues: Molybdopterin synthase sulfur carrier subunit (96 aa).

The residue at position 96 (G96) is a 1-thioglycine; alternate. Residue G96 is modified to Glycyl adenylate; alternate.

The protein belongs to the MoaD family. MOCS2A subfamily. Heterotetramer; composed of 2 small (MOCS2A) and 2 large (MOCS2B) subunits. Post-translationally, C-terminal thiocarboxylation occurs in 2 steps, it is first acyl-adenylated (-COAMP) via the hesA/moeB/thiF part of MOCS3, then thiocarboxylated (-COSH) via the rhodanese domain of MOCS3.

Its subcellular location is the cytoplasm. Its pathway is cofactor biosynthesis; molybdopterin biosynthesis. Acts as a sulfur carrier required for molybdopterin biosynthesis. Component of the molybdopterin synthase complex that catalyzes the conversion of precursor Z into molybdopterin by mediating the incorporation of 2 sulfur atoms into precursor Z to generate a dithiolene group. In the complex, serves as sulfur donor by being thiocarboxylated (-COSH) at its C-terminus by MOCS3. After interaction with MOCS2B, the sulfur is then transferred to precursor Z to form molybdopterin. The polypeptide is Molybdopterin synthase sulfur carrier subunit (Arabidopsis thaliana (Mouse-ear cress)).